A 54-amino-acid chain; its full sequence is Small polypeptide DEVIL 12 (54 aa).

Positions 20–51 (NNKLTPNRSLKETRSRLYIIRRCLVMLLCWRE) are required for DVL/RTFL small polypeptide activity. N-linked (GlcNAc...) asparagine glycosylation is present at Asn-26. A helical membrane pass occupies residues 31-48 (ETRSRLYIIRRCLVMLLC).

It belongs to the DVL/RTFL small polypeptides family.

It is found in the cell membrane. Its function is as follows. Small polypeptide acting as a regulatory molecule which coordinates cellular responses required for differentiation, growth and development, probably by restricting polar cell proliferation in lateral organs and coordinating socket cell recruitment and differentiation at trichome sites. This Arabidopsis thaliana (Mouse-ear cress) protein is Small polypeptide DEVIL 12.